Consider the following 179-residue polypeptide: Protein GrpE (179 aa).

Over residues 1–10 (MSKKEEKQEE) the composition is skewed to basic and acidic residues. The segment at 1-23 (MSKKEEKQEELQEEMEAVDAAGV) is disordered.

The protein belongs to the GrpE family. In terms of assembly, homodimer.

It localises to the cytoplasm. In terms of biological role, participates actively in the response to hyperosmotic and heat shock by preventing the aggregation of stress-denatured proteins, in association with DnaK and GrpE. It is the nucleotide exchange factor for DnaK and may function as a thermosensor. Unfolded proteins bind initially to DnaJ; upon interaction with the DnaJ-bound protein, DnaK hydrolyzes its bound ATP, resulting in the formation of a stable complex. GrpE releases ADP from DnaK; ATP binding to DnaK triggers the release of the substrate protein, thus completing the reaction cycle. Several rounds of ATP-dependent interactions between DnaJ, DnaK and GrpE are required for fully efficient folding. The protein is Protein GrpE of Enterococcus faecalis (strain ATCC 700802 / V583).